A 307-amino-acid chain; its full sequence is Probable transposase for transposon Tn903 (307 aa).

In terms of biological role, required for transposition of transposon Tn903. The sequence is that of Probable transposase for transposon Tn903 from Escherichia coli.